A 412-amino-acid polypeptide reads, in one-letter code: MSARFTVKKLGAQGDGIAETESGDLFIPFTLPGESVTAARERDRAALMAVLEASLLRIEPACRHFTECGGCALQHFEAEAYRQWKRDKVVHALKGIDCSIDELVACAPHTRRRVVLAARRSETGMLLGFNRHLSPEIISISECPISLPEIVAALDRLRALADLICATTKSFRMAVTVTGSGLDVAVYESGKLGEHQRRIASNFVLAQGFARLSIDDEIIIEPRKPVVMFGSVAVAVPPGAFLQATEAAEQAMAEIVGTHLKRAKKVADLFAGCGSFALRLAAKSEVHAVEGDAAALSALDRGARFATGLKRVTGERRDLFRRPLTFKELNTFDGLVFDPPRAGAEDQSKQIARSDVPFVAAVSCNPVTLARDLRILIDGGYQVKSVTPIDQFLWSSHVEAVALLDKPRRRRG.

[4Fe-4S] cluster is bound by residues cysteine 62, cysteine 68, cysteine 71, and cysteine 143. Residues glutamine 243, phenylalanine 270, glutamate 290, and aspartate 338 each contribute to the S-adenosyl-L-methionine site. The Nucleophile role is filled by cysteine 364.

This sequence belongs to the class I-like SAM-binding methyltransferase superfamily. RNA M5U methyltransferase family.

This is an uncharacterized protein from Mesorhizobium japonicum (strain LMG 29417 / CECT 9101 / MAFF 303099) (Mesorhizobium loti (strain MAFF 303099)).